The chain runs to 616 residues: Alpha terpineol synthase, chloroplastic (616 aa).

A chloroplast-targeting transit peptide spans 1 to 41 (MALLSVAPLQKPLTSCSPFSTTMPTLGVCTPRKVVTPSIIM). Asp367, Asp371, and Asp519 together coordinate Mg(2+). Residues 367 to 371 (DDIYD) carry the DDXXD motif motif.

The protein belongs to the terpene synthase family. Tpsd subfamily. Requires Mg(2+) as cofactor. Mn(2+) serves as cofactor.

The protein localises to the plastid. Its subcellular location is the chloroplast. It carries out the reaction (2E)-geranyl diphosphate + H2O = (S)-alpha-terpineol + diphosphate. The catalysed reaction is (2E)-geranyl diphosphate + H2O = 1,8-cineole + diphosphate. It catalyses the reaction (2E)-geranyl diphosphate = beta-myrcene + diphosphate. The enzyme catalyses (2E)-geranyl diphosphate = (1S,5S)-sabinene + diphosphate. It participates in terpene metabolism; oleoresin biosynthesis. Its pathway is secondary metabolite biosynthesis; terpenoid biosynthesis. In terms of biological role, monoterpene synthase (TPS) involved in the biosynthesis of monoterpene natural products included in conifer oleoresin secretions and volatile emissions; these compounds contribute to biotic and abiotic stress defense against herbivores and pathogens. Catalyzes the conversion of (2E)-geranyl diphosphate (GPP) to alpha-terpineol and, to a lower extent, to 1,8-cineole, myrcene and (-)-sabinene. The sequence is that of Alpha terpineol synthase, chloroplastic from Pinus contorta (Shore pine).